The sequence spans 619 residues: Probable serine/threonine-protein kinase WNK8 (619 aa).

Positions 1 to 14 are enriched in basic and acidic residues; that stretch reads MSGARRCGDRRSER. Residues 1-30 are disordered; it reads MSGARRCGDRRSERSSVVGDNRNGYVETDP. The Protein kinase domain occupies 35 to 291; the sequence is GRLSEVLGKG…AEELLLDPFL (257 aa). ATP contacts are provided by residues 115 to 118 and Lys-163; that span reads TELF. The active-site Proton acceptor is Asp-180. 4 disordered regions span residues 293-335, 419-464, 508-555, and 585-619; these read PPQN…AKTT, YADD…PGPH, CSAS…SMVD, and GFRDPTTYGSSSSSSSSQHRRRSSSKVDHKHHYMF. Residues 419–428 are compositionally biased toward acidic residues; sequence YADDDDDDDV. Over residues 439 to 448 the composition is skewed to low complexity; sequence SSSPTSSQGS. The segment covering 602 to 619 has biased composition (basic residues); that stretch reads QHRRRSSSKVDHKHHYMF.

Belongs to the protein kinase superfamily. Ser/Thr protein kinase family. WNK subfamily.

The enzyme catalyses L-seryl-[protein] + ATP = O-phospho-L-seryl-[protein] + ADP + H(+). It catalyses the reaction L-threonyl-[protein] + ATP = O-phospho-L-threonyl-[protein] + ADP + H(+). The sequence is that of Probable serine/threonine-protein kinase WNK8 (WNK8) from Oryza sativa subsp. japonica (Rice).